The primary structure comprises 231 residues: Histidine biosynthesis bifunctional protein HisIE (231 aa).

The phosphoribosyl-AMP cyclohydrolase stretch occupies residues 1–130 (MQDVFRQIDW…QKYPIGVYHI (130 aa)). The phosphoribosyl-ATP pyrophosphohydrolase stretch occupies residues 131–231 (LDDLYHIIEQ…GIEEKASRKH (101 aa)).

It in the N-terminal section; belongs to the PRA-CH family. The protein in the C-terminal section; belongs to the PRA-PH family.

It is found in the cytoplasm. It carries out the reaction 1-(5-phospho-beta-D-ribosyl)-ATP + H2O = 1-(5-phospho-beta-D-ribosyl)-5'-AMP + diphosphate + H(+). It catalyses the reaction 1-(5-phospho-beta-D-ribosyl)-5'-AMP + H2O = 1-(5-phospho-beta-D-ribosyl)-5-[(5-phospho-beta-D-ribosylamino)methylideneamino]imidazole-4-carboxamide. The protein operates within amino-acid biosynthesis; L-histidine biosynthesis; L-histidine from 5-phospho-alpha-D-ribose 1-diphosphate: step 2/9. It participates in amino-acid biosynthesis; L-histidine biosynthesis; L-histidine from 5-phospho-alpha-D-ribose 1-diphosphate: step 3/9. The protein is Histidine biosynthesis bifunctional protein HisIE of Helicobacter hepaticus (strain ATCC 51449 / 3B1).